The sequence spans 391 residues: Immediate-early protein 2 (391 aa).

The protein belongs to the herpesviridae US22 family.

Its subcellular location is the host cytoplasm. The protein localises to the host nucleus. In terms of biological role, involved in the reactivation of latent MCMV in spleen cells. The chain is Immediate-early protein 2 (IE2) from Murid herpesvirus 1 (strain Smith) (MuHV-1).